We begin with the raw amino-acid sequence, 71 residues long: Translation initiation factor IF-1 (71 aa).

In terms of domain architecture, S1-like spans 1 to 71 (MSKDDLIQFT…LTKGRVIHRH (71 aa)).

It belongs to the IF-1 family. As to quaternary structure, component of the 30S ribosomal translation pre-initiation complex which assembles on the 30S ribosome in the order IF-2 and IF-3, IF-1 and N-formylmethionyl-tRNA(fMet); mRNA recruitment can occur at any time during PIC assembly.

Its subcellular location is the cytoplasm. Functionally, one of the essential components for the initiation of protein synthesis. Stabilizes the binding of IF-2 and IF-3 on the 30S subunit to which N-formylmethionyl-tRNA(fMet) subsequently binds. Helps modulate mRNA selection, yielding the 30S pre-initiation complex (PIC). Upon addition of the 50S ribosomal subunit IF-1, IF-2 and IF-3 are released leaving the mature 70S translation initiation complex. The polypeptide is Translation initiation factor IF-1 (Rickettsia conorii (strain ATCC VR-613 / Malish 7)).